Reading from the N-terminus, the 148-residue chain is Lysozyme C (148 aa).

A signal peptide spans 1–18; that stretch reads MRALIILGLVLLSVTVQG. One can recognise a C-type lysozyme domain in the interval 19–148; the sequence is KIFERCELAR…VSQYVKGCGV (130 aa). Disulfide bonds link Cys-24–Cys-146, Cys-48–Cys-134, Cys-83–Cys-99, and Cys-95–Cys-113. Catalysis depends on residues Glu-53 and Asp-71.

The protein belongs to the glycosyl hydrolase 22 family. Monomer.

The protein localises to the secreted. It carries out the reaction Hydrolysis of (1-&gt;4)-beta-linkages between N-acetylmuramic acid and N-acetyl-D-glucosamine residues in a peptidoglycan and between N-acetyl-D-glucosamine residues in chitodextrins.. In terms of biological role, lysozymes have primarily a bacteriolytic function; those in tissues and body fluids are associated with the monocyte-macrophage system and enhance the activity of immunoagents. Also plays a role in digestion in this species. The chain is Lysozyme C (LYZ) from Trachypithecus francoisi (Francois' leaf monkey).